Reading from the N-terminus, the 417-residue chain is Serine hydroxymethyltransferase (417 aa).

Residues L112 and 116 to 118 (GHL) each bind (6S)-5,6,7,8-tetrahydrofolate. An N6-(pyridoxal phosphate)lysine modification is found at K221. E247 is a binding site for (6S)-5,6,7,8-tetrahydrofolate.

Belongs to the SHMT family. As to quaternary structure, homodimer. Requires pyridoxal 5'-phosphate as cofactor.

It localises to the cytoplasm. It carries out the reaction (6R)-5,10-methylene-5,6,7,8-tetrahydrofolate + glycine + H2O = (6S)-5,6,7,8-tetrahydrofolate + L-serine. It participates in one-carbon metabolism; tetrahydrofolate interconversion. It functions in the pathway amino-acid biosynthesis; glycine biosynthesis; glycine from L-serine: step 1/1. Catalyzes the reversible interconversion of serine and glycine with tetrahydrofolate (THF) serving as the one-carbon carrier. This reaction serves as the major source of one-carbon groups required for the biosynthesis of purines, thymidylate, methionine, and other important biomolecules. Also exhibits THF-independent aldolase activity toward beta-hydroxyamino acids, producing glycine and aldehydes, via a retro-aldol mechanism. The polypeptide is Serine hydroxymethyltransferase (Borreliella afzelii (strain PKo) (Borrelia afzelii)).